Here is a 596-residue protein sequence, read N- to C-terminus: Signal peptide peptidase-like 2B (596 aa).

The signal sequence occupies residues 1-21; it reads MAARWAQFLLFSLLSLPQVYC. The Lumenal segment spans residues 22 to 170; sequence EYGMVHVLSE…APNEPVLDYN (149 aa). Positions 53 to 147 constitute a PA domain; sequence HDLGKASLLQ…LLSYSDMLDI (95 aa). An N-linked (GlcNAc...) asparagine glycan is attached at asparagine 93. Residues 171–191 form a helical membrane-spanning segment; the sequence is MVIIFVMAVGTVAIGGYWAGS. The Cytoplasmic portion of the chain corresponds to 192–219; that stretch reads RDVKERYMKHKRDDGAEKHEDETVDVTP. A helical membrane pass occupies residues 220–240; sequence IMICVFVVMCCSMLVLLYFFY. Residues 241 to 242 are Lumenal-facing; that stretch reads DH. A helical membrane pass occupies residues 243-263; sequence LVYVIIGIFCLAASIGLYSCL. At 264–289 the chain is on the cytoplasmic side; sequence SPFVRRFPLGKCRIPDNNLPYFHKRP. A helical membrane pass occupies residues 290–310; sequence QVRILLLAVFCISVSVVWGVF. Over 311–315 the chain is Lumenal; that stretch reads RNEDQ. The helical transmembrane segment at 316–336 threads the bilayer; the sequence is WAWVLQDALGIAFCLYMLKTI. The Cytoplasmic segment spans residues 337–344; it reads RLPTFKGC. A helical membrane pass occupies residues 345 to 365; it reads TLLLLVLFVYDVFFVFITPFL. The active site involves aspartate 355. Topologically, residues 366-408 are lumenal; sequence TKTGESIMVEVAAGPSDSATHEKLPMVLKVPRLNSSPLALCDR. The chain crosses the membrane as a helical span at residues 409-429; sequence PFSLLGFGDILVPGLLVAYCH. Aspartate 417 is a catalytic residue. Over 430–441 the chain is Cytoplasmic; sequence RFDIQVQSSRVY. The helical transmembrane segment at 442–462 threads the bilayer; the sequence is FVACTIAYGIGLLVTFVALAL. Residues 463-466 are Lumenal-facing; the sequence is MQMG. A helical transmembrane segment spans residues 467–487; sequence QPALLYLVPCTLITSFSVALW. Residues 468 to 470 carry the PAL motif; the sequence is PAL. Over 488-596 the chain is Cytoplasmic; it reads RKELAMFWTG…SLNLEQKQLE (109 aa). A disordered region spans residues 543–596; it reads KELHSPTLAAEEPADNDTKTEQSEVSIAQSEEAAGHNKDDLESKSLNLEQKQLE. Positions 575 to 585 are enriched in basic and acidic residues; it reads AAGHNKDDLES. Residues 586-596 show a composition bias toward polar residues; it reads KSLNLEQKQLE.

The protein belongs to the peptidase A22B family.

It is found in the cell membrane. It localises to the golgi apparatus membrane. The protein resides in the lysosome membrane. Its subcellular location is the endosome membrane. The protein localises to the membrane. In terms of biological role, intramembrane-cleaving aspartic protease (I-CLiP) that cleaves type II membrane signal peptides in the hydrophobic plane of the membrane. The polypeptide is Signal peptide peptidase-like 2B (Gallus gallus (Chicken)).